A 2559-amino-acid chain; its full sequence is Ubiquitin carboxyl-terminal hydrolase 9X (2559 aa).

The segment covering 1 to 44 (MTATTRGSPVGGNDNQGQAPDGQSQPPLQQNQTSSPDSSNENSP) has biased composition (polar residues). Positions 1 to 64 (MTATTRGSPV…DAPPQIEDEE (64 aa)) are disordered. A phosphoserine mark is found at S374, S375, and S588. The disordered stretch occupies residues 967–999 (QISSNMPSSPDSSSDSSTGSPGNHGNHYSDGPN). Over residues 969–989 (SSNMPSSPDSSSDSSTGSPGN) the composition is skewed to low complexity. Positions 1557–1956 (VGLKNAGATC…NAYILFYERM (400 aa)) constitute a USP domain. C1566 serves as the catalytic Nucleophile. The interval 1592–1633 (GSDVDDDMSGDEKQDNESNVDPRDDVFGYPQQFEDKPPLSKT) is disordered. The residue at position 1600 (S1600) is a Phosphoserine. 2 stretches are compositionally biased toward basic and acidic residues: residues 1601 to 1617 (GDEK…RDDV) and 1624 to 1633 (FEDKPPLSKT). Zn(2+) is bound by residues C1727, H1729, C1771, and C1774. Residue H1879 is the Proton acceptor of the active site. S2443 carries the phosphoserine modification. Over residues 2475–2484 (PEEEPDDQDA) the composition is skewed to acidic residues. Residues 2475–2559 (PEEEPDDQDA…QTKGSVKCTY (85 aa)) are disordered. Polar residues-rich tracts occupy residues 2503 to 2513 (PGSQYQQNNHV) and 2527 to 2537 (NNPQRTGQRAQ). The residue at position 2540 (Y2540) is a Phosphotyrosine. S2547 carries the post-translational modification Phosphoserine. T2551 carries the post-translational modification Phosphothreonine.

It belongs to the peptidase C19 family. Interacts with SMAD4, MARK4, NUAK1 and BIRC5/survivin. Interacts with DCX. Interacts with OTUD4 and USP7; the interaction is direct. In terms of tissue distribution, highest levels in liver and brain with expression also detected in heart, muscle, spleen and kidney (at protein leve). Ubiquitously expressed in adult tissues.

It is found in the cytoplasm. It localises to the cytosol. The protein resides in the cell projection. The protein localises to the growth cone. Its subcellular location is the cytoskeleton. It is found in the cilium axoneme. The catalysed reaction is Thiol-dependent hydrolysis of ester, thioester, amide, peptide and isopeptide bonds formed by the C-terminal Gly of ubiquitin (a 76-residue protein attached to proteins as an intracellular targeting signal).. Its function is as follows. Deubiquitinase involved both in the processing of ubiquitin precursors and of ubiquitinated proteins. May therefore play an important regulatory role at the level of protein turnover by preventing degradation of proteins through the removal of conjugated ubiquitin. Specifically hydrolyzes 'Lys-11'-, followed by 'Lys-63'-, 'Lys-48'- and 'Lys-6'-linked polyubiquitins chains. Essential component of TGF-beta/BMP signaling cascade. Specifically deubiquitinates monoubiquitinated SMAD4, opposing the activity of E3 ubiquitin-protein ligase TRIM33. Deubiquitinates alkylation repair enzyme ALKBH3. OTUD4 recruits USP7 and USP9X to stabilize ALKBH3, thereby promoting the repair of alkylated DNA lesions. Deubiquitinates RNA demethylase enzyme ALKBH5, promoting its stability. Deubiquitinates mTORC2 complex component RICTOR at 'Lys-294' by removing 'Lys-63'-linked polyubiquitin chains, stabilizing RICTOR and enhancing its binding to MTOR, thus promoting mTORC2 complex assembly. Regulates chromosome alignment and segregation in mitosis by regulating the localization of BIRC5/survivin to mitotic centromeres. Involved in axonal growth and neuronal cell migration. Regulates cellular clock function by enhancing the protein stability and transcriptional activity of the core circadian protein BMAL1 via its deubiquitinating activity. Acts as a regulator of peroxisome import by mediating deubiquitination of PEX5: specifically deubiquitinates PEX5 monoubiquitinated at 'Cys-11' following its retrotranslocation into the cytosol, resetting PEX5 for a subsequent import cycle. Deubiquitinates PEG10. Inhibits the activation of the Hippo signaling pathway via deubiquitination of AMOTL2 at 'Lys-337' and 'Lys-404' which prohibits its interaction with and activation of LATS2. Loss of LATS2 activation and subsequent loss of YAP1 phosphorylation results in an increase in YAP1-driven transcription of target genes. In Mus musculus (Mouse), this protein is Ubiquitin carboxyl-terminal hydrolase 9X.